The chain runs to 333 residues: B3 domain-containing transcription factor NGA4 (333 aa).

The TF-B3 DNA-binding region spans 36–145; it reads FDKVLTPSDV…KIMFIDWRPR (110 aa). The tract at residues 268-333 is disordered; the sequence is VEESSSSGDT…YKRKGKSLEL (66 aa). A compositionally biased stretch (basic and acidic residues) spans 323-333; the sequence is EYKRKGKSLEL.

The protein resides in the nucleus. Functionally, regulates lateral organ growth. Functionally redundant with NGA1, NGA2 and NGA3. The sequence is that of B3 domain-containing transcription factor NGA4 (NGA4) from Arabidopsis thaliana (Mouse-ear cress).